A 2178-amino-acid polypeptide reads, in one-letter code: Toxin A (2178 aa).

The segment at 1–93 is four-helical bundle; sequence MLITREQLMK…RELIKNSRTS (93 aa). One can recognise a GT44 domain in the interval 98–474; it reads KNLSFIWIGG…KPEVNSTVFF (377 aa). The segment at 98-474 is glucosyltransferase region; that stretch reads KNLSFIWIGG…KPEVNSTVFF (377 aa). The interval 98–474 is N-acetylglucosaminyltransferase region; the sequence is KNLSFIWIGG…KPEVNSTVFF (377 aa). Residues 103 to 105, asparagine 141, 267 to 271, and 284 to 286 each bind UDP-N-acetyl-alpha-D-glucosamine; these read IWI, SDILR, and DLD. Positions 284, 286, and 520 each coordinate Mg(2+). Residue 523-525 participates in UDP-N-acetyl-alpha-D-glucosamine binding; it reads SSW. Residues 549–806 form an autoprocessing region region; it reads NYEDGLNFNK…RVEQLNKVAE (258 aa). 1D-myo-inositol hexakisphosphate is bound by residues asparagine 557, lysine 607, and lysine 651. Residues 574-787 form the Peptidase C80 domain; that stretch reads VNSTKIYENY…QISNKYVVYW (214 aa). The active-site For protease activity is histidine 657. Cysteine 707 functions as the Nucleophile; for protease activity in the catalytic mechanism. 1D-myo-inositol hexakisphosphate is bound by residues 758 to 759 and lysine 782; that span reads KR. The tract at residues 807–1485 is translocation region; sequence FAKDINSIIQ…VYMEGKIFLN (679 aa). 14 Cell wall-binding repeats span residues 1799 to 1818, 1820 to 1839, 1870 to 1889, 1890 to 1909, 1910 to 1929, 1931 to 1950, 1951 to 1970, 2004 to 2023, 2024 to 2043, 2045 to 2060, 2064 to 2083, 2114 to 2133, 2134 to 2153, and 2155 to 2174; these read EYGWINIDSRWYFFDSINLI, KKGYQEIEGERYYFNPNTGV, YTGWLTLDGNKYYFQSNSKA, VTGLQKISDKYYYFNDNGQM, QIKWQIINNNKYYFDGNTGE, IIGWFNNNKERYYFDSEGRL, LTGYQVIGDKSYYFSDNING, YKGWLDLNGNKYYFNSDSIA, VTGSYNIKGIQYYFNPKTAV, TNGWYTLDNNNYYVSN, VLGYQDIDGKGYYFDPSTGI, YTGWLHLNGNKYYFGYYNSA, VTGWRVLGGKRYFFNIKTGA, and TTGLLTLSGKRYYFNEKGEQ.

Belongs to the clostridial glucosylating toxin (LCGT) family. Requires Mn(2+) as cofactor. It depends on Mg(2+) as a cofactor. Post-translationally, undergoes autocatalytic cleavage to release the N-terminal part (N-acetylglucosaminyltransferase TcdA), which constitutes the active part of the toxin, in the host cytosol. 1D-myo-inositol hexakisphosphate-binding (InsP6) activates the peptidase C80 domain and promotes autoprocessing.

It localises to the secreted. Its subcellular location is the host endosome membrane. The protein localises to the host cytoplasm. The protein resides in the host cytosol. It is found in the host cell membrane. It catalyses the reaction L-threonyl-[protein] + UDP-N-acetyl-alpha-D-glucosamine = 3-O-(N-acetyl-alpha-D-glucosaminyl)-L-threonyl-[protein] + UDP + H(+). Protease activity is activated upon binding to 1D-myo-inositol hexakisphosphate (InsP6), which induces conformational reorganization. Functionally, precursor of a cytotoxin, which enters into host cells and mediates autoprocessing to release the active toxin (N-acetylglucosaminyltransferase TcdA) into the host cytosol. Once entered into host cells, acidification in the endosome promotes the membrane insertion of the translocation region and formation of a pore, leading to translocation of the GT44 and peptidase C80 domains across the endosomal membrane. This activates the peptidase C80 domain and autocatalytic processing, releasing the N-terminal part (N-acetylglucosaminyltransferase TcdA), which constitutes the active part of the toxin, in the cytosol. Its function is as follows. Active form of the toxin, which is released into the host cytosol following autoprocessing and inactivates small GTPases. Acts by mediating monoglycosylation of small GTPases of the Rho family (Rac1, RhoA, RhoG and Cdc42) in host cells at the conserved threonine residue located in the switch I region ('Thr-37/35'), using UDP-N-acetyl-alpha-D-glucosamine as the sugar donor. Monoglycosylation of host small GTPases completely prevents the recognition of the downstream effector, blocking the GTPases in their inactive form, leading to actin cytoskeleton disruption and cell death. In Clostridium novyi, this protein is Toxin A (tcdA).